A 476-amino-acid chain; its full sequence is Stromelysin-2 (476 aa).

The first 17 residues, 1–17, serve as a signal peptide directing secretion; sequence MMHLAFLVLLCLPVCSA. A propeptide spans 18-98 (activation peptide); that stretch reads YPLSGAAKEE…PRCGVPDVGH (81 aa). The Cysteine switch motif lies at 89–96; the sequence is PRCGVPDV. Cys91, His167, Asp169, His182, His195, and His217 together coordinate Zn(2+). Glu218 is a catalytic residue. The Zn(2+) site is built by His221 and His227. 4 Hemopexin repeats span residues 286-335, 336-382, 384-432, and 433-476; these read PAKC…WPSL, PSYL…GFPP, IRKI…FPGV, and EPKV…WLHC. An intrachain disulfide couples Cys289 to Cys476.

The protein belongs to the peptidase M10A family. Zn(2+) serves as cofactor. The cofactor is Ca(2+).

The protein resides in the secreted. It is found in the extracellular space. Its subcellular location is the extracellular matrix. The catalysed reaction is Similar to stromelysin 1, but action on collagen types III, IV and V is weak.. In terms of biological role, can degrade fibronectin, gelatins of type I, III, IV, and V; weakly collagens III, IV, and V. Activates procollagenase. This Homo sapiens (Human) protein is Stromelysin-2 (MMP10).